Reading from the N-terminus, the 469-residue chain is RuvB-like helicase 2 (469 aa).

74–81 (GPPSTGKT) provides a ligand contact to ATP.

This sequence belongs to the RuvB family. In terms of assembly, may form heterododecamers with RVB1. Component of the SWR1 chromatin remodeling complex, the INO80 chromatin remodeling complex, and of the R2TP complex.

The protein resides in the nucleus. It carries out the reaction ATP + H2O = ADP + phosphate + H(+). DNA helicase which participates in several chromatin remodeling complexes, including the SWR1 and the INO80 complexes. The SWR1 complex mediates the ATP-dependent exchange of histone H2A for the H2A variant HZT1 leading to transcriptional regulation of selected genes by chromatin remodeling. The INO80 complex remodels chromatin by shifting nucleosomes and is involved in DNA repair. Also involved in pre-rRNA processing. The protein is RuvB-like helicase 2 (RVB2) of Eremothecium gossypii (strain ATCC 10895 / CBS 109.51 / FGSC 9923 / NRRL Y-1056) (Yeast).